The sequence spans 448 residues: Homogentisate 1,2-dioxygenase (448 aa).

Catalysis depends on His303, which acts as the Proton acceptor. 2 residues coordinate Fe cation: His346 and Glu352. The homogentisate site is built by Tyr361 and His382. His382 contacts Fe cation.

This sequence belongs to the homogentisate dioxygenase family. Hexamer; dimer of trimers. Fe cation is required as a cofactor.

The catalysed reaction is homogentisate + O2 = 4-maleylacetoacetate + H(+). The protein operates within amino-acid degradation; L-phenylalanine degradation; acetoacetate and fumarate from L-phenylalanine: step 4/6. Its function is as follows. Involved in the catabolism of homogentisate (2,5-dihydroxyphenylacetate or 2,5-OH-PhAc), a central intermediate in the degradation of phenylalanine and tyrosine. Catalyzes the oxidative ring cleavage of the aromatic ring of homogentisate to yield maleylacetoacetate. The protein is Homogentisate 1,2-dioxygenase of Rhodopseudomonas palustris (strain HaA2).